Reading from the N-terminus, the 210-residue chain is Natriuretic peptide BM026 (210 aa).

An N-terminal signal peptide occupies residues 1–26 (MVGPSRLAGGGLLLLLLALLPVALDG). A natriuretic peptide domain 1 region spans residues 83–99 (CFGHKIDRISHSSGMGC). An intrachain disulfide couples C83 to C99. The segment covering 122–134 (ESKKSRAARDRMV) has biased composition (basic and acidic residues). The disordered stretch occupies residues 122 to 210 (ESKKSRAARD…QFNSKSSQVA (89 aa)). Gly residues predominate over residues 140 to 150 (AGGGGGGGGGD). The segment covering 156-176 (ELAKKDQHNNCFGRRIDRISH) has biased composition (basic and acidic residues). Residues 166-182 (CFGRRIDRISHSTDLGC) form a natriuretic peptide domain 2 region. A disulfide bond links C166 and C182. Residues 201 to 210 (QFNSKSSQVA) show a composition bias toward polar residues.

This sequence belongs to the natriuretic peptide family. As to expression, expressed by the venom gland.

It is found in the secreted. Functionally, natriuretic peptide that dose-dependently induces the rapid relaxation of rat aortic strips phenylephrine-precontracted. Acts by stimulating cGMP production in a dose-dependent manner (by probably activating NPR1 and/or NPR2). May also show potent hypotensive effects. The sequence is that of Natriuretic peptide BM026 from Bungarus multicinctus (Many-banded krait).